We begin with the raw amino-acid sequence, 251 residues long: Thiamine thiazole synthase (251 aa).

Residues Ser-34, 53–54, Gly-61, Val-125, and 151–153 contribute to the NAD(+) site; these read EK and HVD. Residues Asp-153 and His-168 each coordinate Fe cation. An NAD(+)-binding site is contributed by Met-216. Arg-226 contacts glycine.

This sequence belongs to the THI4 family. As to quaternary structure, homooctamer; tetramer of dimers. Fe(2+) is required as a cofactor.

It catalyses the reaction hydrogen sulfide + glycine + NAD(+) = ADP-5-ethyl-4-methylthiazole-2-carboxylate + nicotinamide + 3 H2O + H(+). Its pathway is cofactor biosynthesis; thiamine diphosphate biosynthesis. In terms of biological role, involved in the biosynthesis of the thiazole moiety of thiamine. Catalyzes the conversion of NAD and glycine to adenosine diphosphate 5-(2-hydroxyethyl)-4-methylthiazole-2-carboxylate (ADT), an adenylated thiazole intermediate, using free sulfide as a source of sulfur. The chain is Thiamine thiazole synthase from Thermococcus kodakarensis (strain ATCC BAA-918 / JCM 12380 / KOD1) (Pyrococcus kodakaraensis (strain KOD1)).